A 32-amino-acid chain; its full sequence is Calichemicin antitumor antibiotic biosynthesis protein (32 aa).

This chain is Calichemicin antitumor antibiotic biosynthesis protein, found in Micromonospora echinospora (Micromonospora purpurea).